We begin with the raw amino-acid sequence, 70 residues long: DNA-directed RNA polymerase subunit omega (70 aa).

The protein belongs to the RNA polymerase subunit omega family. In terms of assembly, the RNAP catalytic core consists of 2 alpha, 1 beta, 1 beta' and 1 omega subunit. When a sigma factor is associated with the core the holoenzyme is formed, which can initiate transcription.

The enzyme catalyses RNA(n) + a ribonucleoside 5'-triphosphate = RNA(n+1) + diphosphate. Promotes RNA polymerase assembly. Latches the N- and C-terminal regions of the beta' subunit thereby facilitating its interaction with the beta and alpha subunits. The polypeptide is DNA-directed RNA polymerase subunit omega (Staphylococcus epidermidis (strain ATCC 35984 / DSM 28319 / BCRC 17069 / CCUG 31568 / BM 3577 / RP62A)).